We begin with the raw amino-acid sequence, 116 residues long: Cysteine proteinase inhibitor 1 (116 aa).

The signal sequence occupies residues 1–26 (MVPKPLSLLLFLLLALSAAVVGGRKL). One can recognise a Cystatin domain in the interval 30–89 (GGWRPIESLNSAEVQDVAQFAVSEHNKQANDELQYQSVVRGYTQVVAGTNYRLVIAAKDG). The Secondary area of contact motif lies at 73-77 (QVVAG). An N-linked (GlcNAc...) asparagine glycan is attached at N109.

The protein belongs to the cystatin family. Phytocystatin subfamily. In terms of processing, glycosylated.

The protein resides in the secreted. In terms of biological role, specific inhibitor of papain family cysteine proteinases. Inhibits papain, chymopapain, bromelain, ficin, human cathepsins B, H and L, actinidain and house dustmite endopeptidase 1, but does not inhibit human bleomycin hydrolase. Inhibits papain with an IC(50) of 2.47 nM. Does not inhibit cysteine proteinases belonging to other families including clostripain, streptopain and calpain. The sequence is that of Cysteine proteinase inhibitor 1 from Actinidia deliciosa (Kiwi).